The sequence spans 457 residues: Argininosuccinate lyase (457 aa).

It belongs to the lyase 1 family. Argininosuccinate lyase subfamily.

It is found in the cytoplasm. It carries out the reaction 2-(N(omega)-L-arginino)succinate = fumarate + L-arginine. Its pathway is amino-acid biosynthesis; L-arginine biosynthesis; L-arginine from L-ornithine and carbamoyl phosphate: step 3/3. This is Argininosuccinate lyase from Escherichia coli O157:H7 (strain EC4115 / EHEC).